Reading from the N-terminus, the 799-residue chain is MTAEADLLEGYDEELGGNESQKRDCKGITTAIVVVLLILVMIFAALVFFTPLFAAKSFGSWRLNVSDLRSLRYPYAEFAFTDNNAVVMQSWEGVEIVEDGVSRLIFGRENGAEITPSADRKYFAMMDHAPNPGMNPQNETFHLKIVNNNERLNPLLPFEVEELFRELSDSRITYDIGLRKEESVIQAFKWNGKFNDFVFVESNKIYYQSSPEEEGLTRVSNGGEHTVDGLFDWIYEEEIFGRKDAMWWSTKGDQLAYASYDNHLTKNVSLKTYHRLEPYPIDTNFHYPKTFAKVLPTYTLSIWNKKTEQSRQLDVQLKDSLSYHYLLAVKWLEINGTEQLVSVWTNRYQNEVALTICDWDTAICRLEFEYKYASKRWVTHDDFHSITSFEDTLFFLLPHDKRDNAFQQVASLRLSHGQLRTPKFLNLGEYDVTSINGINKETRTIFFHAAAPKPSHRSLFSYSLADESRNSAYCISCSIKNCTWAQAQMDDQMKTAIVSCKGPAAPHTAIVNLTRMDSDKKTEHANLLYDKTYQNRVEEAGLPVIIKETIKISDDFDALIKLSIPKDIYNRDKHQAIPLIVHVYGGPNDQNTKEATQIGIEEVVASASQAAILRIDGRGSGGRGWKYRSAIYGQLGTVEVEDQIKAIKVVLRLYRHLLDARRVAVFGWSYGGFMTLSMVNEAPEQFFKCAVSVAPVTNFAYYDATYTERYMGDAPLESYSDVTKKLDNFKSTRLLLMHGLLDDNVHFQNSAILIDELQNRGVDFDLMVYPNQAHSLSSRTSHVVGKMTHFLRQCFYTDK.

At 1–31 the chain is on the cytoplasmic side; it reads MTAEADLLEGYDEELGGNESQKRDCKGITTA. A helical; Signal-anchor for type II membrane protein membrane pass occupies residues 32-52; the sequence is IVVVLLILVMIFAALVFFTPL. At 53-799 the chain is on the lumenal side; it reads FAAKSFGSWR…FLRQCFYTDK (747 aa). N-linked (GlcNAc...) asparagine glycosylation is found at Asn64, Asn138, Asn267, and Asn335. Cys474 and Cys477 are oxidised to a cystine. An N-linked (GlcNAc...) asparagine glycan is attached at Asn481. Cys482 and Cys500 are disulfide-bonded. Residue Asn512 is glycosylated (N-linked (GlcNAc...) asparagine). Catalysis depends on charge relay system residues Ser669, Asp742, and His774. Cys689 and Cys794 are joined by a disulfide.

Belongs to the peptidase S9B family. DPPIV subfamily.

It localises to the cell membrane. Removes N-terminal dipeptides sequentially from polypeptides. Essential for control of distal tip cell migration. The polypeptide is Dipeptidyl peptidase family member 1 (dpf-1) (Caenorhabditis elegans).